A 282-amino-acid polypeptide reads, in one-letter code: Bis(5'-nucleosyl)-tetraphosphatase, symmetrical (282 aa).

It belongs to the Ap4A hydrolase family.

It carries out the reaction P(1),P(4)-bis(5'-adenosyl) tetraphosphate + H2O = 2 ADP + 2 H(+). Hydrolyzes diadenosine 5',5'''-P1,P4-tetraphosphate to yield ADP. The sequence is that of Bis(5'-nucleosyl)-tetraphosphatase, symmetrical from Burkholderia mallei (strain NCTC 10247).